We begin with the raw amino-acid sequence, 265 residues long: Tyrosine protein kinase-interacting protein (265 aa).

Residues Met1–Pro14 are compositionally biased toward acidic residues. The interval Met1–Ile49 is disordered. The Cytoplasmic portion of the chain corresponds to Met1 to Ala238. Residues Glu15–Leu26 show a composition bias toward basic and acidic residues. Residues Ser27 to Asp43 show a composition bias toward low complexity. Tyr123 is subject to Phosphotyrosine; by host LCK. Tyr136 is modified (phosphotyrosine; by host). The interval Glu155–Tyr164 is CSKH/LBD2. The tract at residues Lys172–Pro192 is disordered. Positions Met183–Pro192 are SH3B/LBD1. Pro residues predominate over residues Met183–Pro192. The tract at residues Ile225–Asn234 is SH3 binding. Residues Ile239 to Leu259 traverse the membrane as a helical segment. Over His260–Ser265 the chain is Extracellular.

Binds host LCK, human WDR48 and human NXF1/TAP. Forms a complex with activated LCK and STAT1 and STAT3. Post-translationally, phosphorylation on Tyr-123 acts as a docking site for the recruitment of STATs 1 and 3.

The protein resides in the host cell membrane. In terms of biological role, plays a critical role in virus induced T-cell transformation. Binds to T-cell-specific tyrosine kinase LCK SH2 and SH3 domains, thereby activating its kinase activity. Once phosphorylated by host LCK, forms a complex with at least STAT 1 and 3, resulting on the phosphorylation of STAT3 and presumably STAT1, and their migration into the nucleus to induce transcription of target genes. Stimulates host ILF3/NF-AT-90 activity. Association with host NXF1/TAP transduces the signal up-regulating surface expression of adhesion molecules as well as activating NF-kappa-B activity. Acts synergistically with StpC to stimulate NF-kappa-B activity and interleukin-2 gene expression. Activation of NF-kappa-B protects lymphocytes from apoptosis, thereby facilitating viral induced cell transformation. May cause down-regulation of host LCK and cell apoptosis when stably overexpressed ex vivo. Interaction with WDR48 induce degradation of T-cell receptor in a lysosome-dependent fashion, when both proteins are overexpressed. The biological effect of this interaction remains controversial since no T-cell receptor degradation is observed in infected cells. The protein is Tyrosine protein kinase-interacting protein of Saimiriine herpesvirus 2 (strain 484) (SaHV-2).